Consider the following 904-residue polypeptide: NADH-quinone oxidoreductase subunit G (904 aa).

Positions 1-83 constitute a 2Fe-2S ferredoxin-type domain; it reads MATIHVDGKE…GSWISIDDEE (83 aa). Residues Cys-34, Cys-45, Cys-48, and Cys-67 each contribute to the [2Fe-2S] cluster site. The region spanning 83 to 122 is the 4Fe-4S His(Cys)3-ligated-type domain; sequence EAKVFRASVVEWLMTNHPHDCPVCEEGGHCHLQDMTVMTG. The [4Fe-4S] cluster site is built by His-99, Cys-103, Cys-106, Cys-112, Cys-151, Cys-154, Cys-157, Cys-201, Cys-228, Cys-231, Cys-235, and Cys-263. The 4Fe-4S Mo/W bis-MGD-type domain occupies 221–277; it reads MQFSPSICHGCSSGCNISPGERYGELRRIENRFNGSVNQYFLCDRGRFGYGYVNRKD.

This sequence belongs to the complex I 75 kDa subunit family. Composed of 13 different subunits. Subunits NuoCD, E, F, and G constitute the peripheral sector of the complex. It depends on [2Fe-2S] cluster as a cofactor. The cofactor is [4Fe-4S] cluster.

The catalysed reaction is a quinone + NADH + 5 H(+)(in) = a quinol + NAD(+) + 4 H(+)(out). NDH-1 shuttles electrons from NADH, via FMN and iron-sulfur (Fe-S) centers, to quinones in the respiratory chain. The immediate electron acceptor for the enzyme in this species is believed to be ubiquinone. Couples the redox reaction to proton translocation (for every two electrons transferred, four hydrogen ions are translocated across the cytoplasmic membrane), and thus conserves the redox energy in a proton gradient. Required for plants roots colonization. The polypeptide is NADH-quinone oxidoreductase subunit G (nuoG) (Pseudomonas fluorescens).